Reading from the N-terminus, the 145-residue chain is MSQKAIKGYINLIIPATGATPAPPIGPALGQRKVNIAAFCKDFNDATQGMEKGIPLPTVITVYEDSSFSFKIKTPPASYFLKKYAKITKGSSATKKEAVVGKVTMDDCCEIAKLKMPDLNTKNIEAATKIICGSAASMGLEVVGN.

Belongs to the universal ribosomal protein uL11 family. As to quaternary structure, part of the ribosomal stalk of the 50S ribosomal subunit. Interacts with L10 and the large rRNA to form the base of the stalk. L10 forms an elongated spine to which L12 dimers bind in a sequential fashion forming a multimeric L10(L12)X complex. One or more lysine residues are methylated.

In terms of biological role, forms part of the ribosomal stalk which helps the ribosome interact with GTP-bound translation factors. The protein is Large ribosomal subunit protein uL11 of Rickettsia massiliae (strain Mtu5).